A 564-amino-acid chain; its full sequence is Beta-catenin-like protein 1 homolog (564 aa).

The tract at residues Met1–Ser56 is disordered. Residues Asn9 to Glu20 are compositionally biased toward basic and acidic residues. The segment covering Glu37 to Glu48 has biased composition (acidic residues). Ser39 is modified (phosphoserine). HEAT repeat units follow at residues Pro83 to Glu133 and Ile138 to Val177. ARM repeat units follow at residues Pro179–Val229, Asp230–Ser276, Lys277–Glu326, Lys328–Gly366, and Pro367–Ser411. Residues Glu465 to Leu528 adopt a coiled-coil conformation.

The protein localises to the nucleus. Functionally, probable spliceosomal component involved in the activation of pre-mRNA splicing. The protein is Beta-catenin-like protein 1 homolog (ctnnbl1) of Schizosaccharomyces pombe (strain 972 / ATCC 24843) (Fission yeast).